The chain runs to 251 residues: MMIRLIIHGCNGKMGKVVAKLAKENPEFEVVAGVDKNTFPLDFPVYSDLKEVKEEADVVIDFSYHEAIPNLVKEAAKRKIPVVIATTGLSEEELKTVEEASKEIPIFRSANMSLGINVLISLVKEAAKVLEGFDIEIVEKHHNMKKDAPSGTALMIADAINQVLPEKREYVYGRYTKTEQRKPNEIGIHAVRGGTIVGEHDVIFAGPNEVITISHSAQSREVFGYGALKAAKFLIGQKPGLYTMEDLVKKG.

Residues 9–14 (GCNGKM), 85–87 (ATT), and 109–112 (SANM) each bind NAD(+). His141 serves as the catalytic Proton donor/acceptor. His142 is a binding site for (S)-2,3,4,5-tetrahydrodipicolinate. The active-site Proton donor is the Lys145. Residue 151 to 152 (GT) participates in (S)-2,3,4,5-tetrahydrodipicolinate binding.

It belongs to the DapB family.

It localises to the cytoplasm. The catalysed reaction is (S)-2,3,4,5-tetrahydrodipicolinate + NAD(+) + H2O = (2S,4S)-4-hydroxy-2,3,4,5-tetrahydrodipicolinate + NADH + H(+). The enzyme catalyses (S)-2,3,4,5-tetrahydrodipicolinate + NADP(+) + H2O = (2S,4S)-4-hydroxy-2,3,4,5-tetrahydrodipicolinate + NADPH + H(+). It functions in the pathway amino-acid biosynthesis; L-lysine biosynthesis via DAP pathway; (S)-tetrahydrodipicolinate from L-aspartate: step 4/4. Functionally, catalyzes the conversion of 4-hydroxy-tetrahydrodipicolinate (HTPA) to tetrahydrodipicolinate. The protein is 4-hydroxy-tetrahydrodipicolinate reductase of Caldanaerobacter subterraneus subsp. tengcongensis (strain DSM 15242 / JCM 11007 / NBRC 100824 / MB4) (Thermoanaerobacter tengcongensis).